A 145-amino-acid chain; its full sequence is Large ribosomal subunit protein uL16 (145 aa).

It belongs to the universal ribosomal protein uL16 family. Part of the 50S ribosomal subunit.

Functionally, binds 23S rRNA and is also seen to make contacts with the A and possibly P site tRNAs. This Exiguobacterium sibiricum (strain DSM 17290 / CCUG 55495 / CIP 109462 / JCM 13490 / 255-15) protein is Large ribosomal subunit protein uL16.